We begin with the raw amino-acid sequence, 499 residues long: Leukocyte immunoglobulin-like receptor subfamily A member 4 (499 aa).

An N-terminal signal peptide occupies residues 1–23 (MTLILTSLLFFGLSLGPRTRVQA). Ig-like C2-type domains are found at residues 24–118 (ENLL…LVVT), 123–213 (PTLS…SDPL), 224–313 (PSLL…DPLD), and 324–413 (PSLS…SEPL). Topologically, residues 24–446 (ENLLKPILWA…PHLQDYTVEN (423 aa)) are extracellular. The cysteines at positions 49 and 98 are disulfide-linked. A glycan (N-linked (GlcNAc...) asparagine) is linked at Asn138. A disulfide bridge links Cys143 with Cys195. N-linked (GlcNAc...) asparagine glycosylation is found at Asn239, Asn279, and Asn300. An intrachain disulfide couples Cys244 to Cys295. Residues Cys344 and Cys395 are joined by a disulfide bond. At Tyr404 the chain carries 3'-nitrotyrosine. The helical transmembrane segment at 447 to 467 (LIRMGVAGLVLLFLGILLFEA) threads the bilayer. Residues 468–499 (QHSQRSPPRCSQEANSRKDNAPFRVVEPWEQI) lie on the Cytoplasmic side of the membrane.

As to quaternary structure, interacts with FCER1G; this stabilizes the expression of both proteins at the cell membrane. Interacts with BST2; leads to activation of LILRA4-mediated signaling and down-regulation of the innate immune response to viral pathogens. As to expression, detected on plasmacytoid dendritic cells (at protein level). Detected on plasmacytoid dendritic cells, but not on monocytes or B cells.

Its subcellular location is the cell membrane. Functionally, functions coreceptor to limit the innate immune responses to viral infections; signaling occurs via FCER1G. Down-regulates the production of IFNA1, IFNA2, IFNA4, IFNB1 and TNF by plasmacytoid dendritic cells that have been exposed to influenza virus or cytidine-phosphate-guanosine (CpG) dinucleotides, indicating it functions as a negative regulator of TLR7 and TLR9 signaling cascades. Down-regulates interferon production in response to interaction with BST2 on HIV-1 infected cells. Activates a signaling cascade in complex with FCER1G that results in phosphorylation of Src family and Syk kinases and thereby triggers mobilization of intracellular Ca(2+). Does not interfere with the differentiation of plasmacytoid dendritic cells into antigen-presenting cells. The chain is Leukocyte immunoglobulin-like receptor subfamily A member 4 from Homo sapiens (Human).